Consider the following 226-residue polypeptide: Protein FMP52-1, mitochondrial (226 aa).

The N-terminal 43 residues, 1–43 (MSAFVLGSTGLVGLQILKVLDSSTAFKKVSTVSRRLPSVTSGK), are a transit peptide targeting the mitochondrion.

The protein belongs to the FMP52 family.

The protein resides in the mitochondrion outer membrane. In Scheffersomyces stipitis (strain ATCC 58785 / CBS 6054 / NBRC 10063 / NRRL Y-11545) (Yeast), this protein is Protein FMP52-1, mitochondrial (FMP521).